We begin with the raw amino-acid sequence, 597 residues long: MEADITNLRNKLKECEDERLKAAQYGLQLLERQTELQSQLDKCHEEMMTTAENYNQEKYALQREVELKSRMLESLSCECEALRQQQKAQLEQLEMQLHRSHRQEVHGLRNKLENLKVELDEARLSEKQLKQKLDHQGELLSHKSEELRLLSEQRALSSVSSELLSLQTELTEAEGVKNALREEVNELQCKQEQLECLNASLLHQVDRLKEEKEEREKEAVSYYNALEKARVENQDLQVQLGHALQQAADPNSKGNSLFAEVEDRRVAMERRLNLMKDKYQSLKKQNAFTRDQMNKMKLQISTLLRMRGSQTEFEQQERLFAMLEQKNGEIKHLLGEINKLEKFKNLYENMESKSSTSDSACALEDSTYYTDLLQLKLDKLNKENESTKGELSIQRMKALFESQRTLDIERKLFANERHLQLSESENLKLRAKLDELKLKYEPEERIEVPVLKRRREVLPLNINTPEETAAASATGEDVSRLPLERKEESCLDNLKDNTVQWKQPASLSPHKSLPLDTQPKKEKCVTLVASPASTEVLHEQSGNTPSSPRLTEESRLPTKVKERKEATSKLEKGASKKSHTIMYVSSKSTPEMQCPQQ.

M1 bears the N-acetylmethionine mark. A coiled-coil region spans residues 1–445 (MEADITNLRN…LKLKYEPEER (445 aa)). Residues S508 and S547 each carry the phosphoserine modification. The tract at residues 531–597 (PASTEVLHEQ…STPEMQCPQQ (67 aa)) is disordered. Over residues 540 to 549 (QSGNTPSSPR) the composition is skewed to polar residues. Positions 550–574 (LTEESRLPTKVKERKEATSKLEKGA) are enriched in basic and acidic residues. Residues 583–597 (YVSSKSTPEMQCPQQ) are compositionally biased toward polar residues.

It belongs to the Spindly family. Interacts with KNTC1 and ZW10. These interactions appear weak and may be transient or indirect. Interacts with dynein intermediate chain and dynactin (DCTN1). Interacts with the catalytically active form of USP45. Post-translationally, monoubiquitinated with'Lys-48' linkage. Deubiquitinated by USP45.

It localises to the cytoplasm. The protein localises to the cytoskeleton. It is found in the microtubule organizing center. Its subcellular location is the centrosome. The protein resides in the chromosome. It localises to the centromere. The protein localises to the kinetochore. It is found in the nucleus. Its subcellular location is the spindle pole. Functionally, required for the localization of dynein and dynactin to the mitotic kintochore. Dynein is believed to control the initial lateral interaction between the kinetochore and spindle microtubules and to facilitate the subsequent formation of end-on kinetochore-microtubule attachments mediated by the NDC80 complex. Also required for correct spindle orientation. Does not appear to be required for the removal of spindle assembly checkpoint (SAC) proteins from the kinetochore upon bipolar spindle attachment. Acts as an adapter protein linking the dynein motor complex to various cargos and converts dynein from a non-processive to a highly processive motor in the presence of dynactin. Facilitates the interaction between dynein and dynactin and activates dynein processivity (the ability to move along a microtubule for a long distance without falling off the track). Plays a role in cell migration. The protein is Protein Spindly (Spdl1) of Rattus norvegicus (Rat).